Consider the following 514-residue polypeptide: Glutamyl-tRNA(Gln) amidotransferase subunit A (514 aa).

Catalysis depends on charge relay system residues Lys-76 and Ser-151. Ser-175 acts as the Acyl-ester intermediate in catalysis.

The protein belongs to the amidase family. GatA subfamily. As to quaternary structure, heterotrimer of A, B and C subunits.

The enzyme catalyses L-glutamyl-tRNA(Gln) + L-glutamine + ATP + H2O = L-glutaminyl-tRNA(Gln) + L-glutamate + ADP + phosphate + H(+). Functionally, allows the formation of correctly charged Gln-tRNA(Gln) through the transamidation of misacylated Glu-tRNA(Gln) in organisms which lack glutaminyl-tRNA synthetase. The reaction takes place in the presence of glutamine and ATP through an activated gamma-phospho-Glu-tRNA(Gln). The sequence is that of Glutamyl-tRNA(Gln) amidotransferase subunit A from Salinibacter ruber (strain DSM 13855 / M31).